The primary structure comprises 505 residues: Glycerol kinase (505 aa).

Threonine 15 contacts ADP. ATP is bound by residues threonine 15, threonine 16, and serine 17. Threonine 15 is a binding site for sn-glycerol 3-phosphate. Residue arginine 19 participates in ADP binding. Positions 85, 86, 136, and 249 each coordinate sn-glycerol 3-phosphate. Glycerol contacts are provided by arginine 85, glutamate 86, tyrosine 136, aspartate 249, and glutamine 250. Positions 271 and 314 each coordinate ADP. Threonine 271, glycine 314, glutamine 318, and glycine 415 together coordinate ATP. Glycine 415 and asparagine 419 together coordinate ADP.

The protein belongs to the FGGY kinase family.

It carries out the reaction glycerol + ATP = sn-glycerol 3-phosphate + ADP + H(+). The protein operates within polyol metabolism; glycerol degradation via glycerol kinase pathway; sn-glycerol 3-phosphate from glycerol: step 1/1. Inhibited by fructose 1,6-bisphosphate (FBP). Its function is as follows. Key enzyme in the regulation of glycerol uptake and metabolism. Catalyzes the phosphorylation of glycerol to yield sn-glycerol 3-phosphate. This chain is Glycerol kinase, found in Mycoplasma capricolum subsp. capricolum (strain California kid / ATCC 27343 / NCTC 10154).